We begin with the raw amino-acid sequence, 680 residues long: uncharacterized protein (680 aa).

The protein belongs to the HyuA family.

This is an uncharacterized protein from Methanocaldococcus jannaschii (strain ATCC 43067 / DSM 2661 / JAL-1 / JCM 10045 / NBRC 100440) (Methanococcus jannaschii).